Here is a 756-residue protein sequence, read N- to C-terminus: Catalase-peroxidase (756 aa).

Residues 91 to 244 (WHSAGTYRTG…LAAVQMGLIY (154 aa)) constitute a cross-link (tryptophyl-tyrosyl-methioninium (Trp-Tyr) (with M-270)). The active-site Proton acceptor is H92. Residues 198 to 230 (AQKKMQQPGDGTLVAEPENHANEESRTASGERN) are disordered. A compositionally biased stretch (basic and acidic residues) spans 214–223 (PENHANEESR). Residues 244 to 270 (YVNPEGPEGVPDPVASARDIRETFGRM) constitute a cross-link (tryptophyl-tyrosyl-methioninium (Tyr-Met) (with W-91)). Residue H285 participates in heme b binding.

It belongs to the peroxidase family. Peroxidase/catalase subfamily. In terms of assembly, homodimer or homotetramer. Heme b is required as a cofactor. In terms of processing, formation of the three residue Trp-Tyr-Met cross-link is important for the catalase, but not the peroxidase activity of the enzyme.

It catalyses the reaction H2O2 + AH2 = A + 2 H2O. The catalysed reaction is 2 H2O2 = O2 + 2 H2O. In terms of biological role, bifunctional enzyme with both catalase and broad-spectrum peroxidase activity. The sequence is that of Catalase-peroxidase from Pseudomonas syringae pv. syringae (strain B728a).